The chain runs to 238 residues: MNHKLPQHIAVVMDGNGRWAESRGLPRVEGHKAGLDSVKKIINCCLEKKISCLSLFAFSSENWSRPVTEVNFLMELFLEALRKEIDDLNQHGIRLKFTGDREPLSQVLQKQMYDAEALTRNNQQLILNVVVNYGGKWDIVTAAKKLIHSVLDGKLACDEINEAVFAQFLDTSGMPEPDLFIRTSGELRISNFFLWQLAYTELYFTDVHWPDFNEHEFELALTSFARRARRFGQISQSE.

Residue Asp14 is part of the active site. Asp14 contacts Mg(2+). Substrate contacts are provided by residues 15–18 (GNGR), Trp19, Arg27, His31, and 59–61 (SSE). The active-site Proton acceptor is the Asn62. Substrate is bound by residues Trp63, Arg65, Arg182, and 188 to 190 (RIS). Glu201 provides a ligand contact to Mg(2+).

Belongs to the UPP synthase family. As to quaternary structure, homodimer. Mg(2+) serves as cofactor.

It carries out the reaction 8 isopentenyl diphosphate + (2E,6E)-farnesyl diphosphate = di-trans,octa-cis-undecaprenyl diphosphate + 8 diphosphate. Catalyzes the sequential condensation of isopentenyl diphosphate (IPP) with (2E,6E)-farnesyl diphosphate (E,E-FPP) to yield (2Z,6Z,10Z,14Z,18Z,22Z,26Z,30Z,34E,38E)-undecaprenyl diphosphate (di-trans,octa-cis-UPP). UPP is the precursor of glycosyl carrier lipid in the biosynthesis of bacterial cell wall polysaccharide components such as peptidoglycan and lipopolysaccharide. This Legionella pneumophila (strain Paris) protein is Ditrans,polycis-undecaprenyl-diphosphate synthase ((2E,6E)-farnesyl-diphosphate specific).